The chain runs to 426 residues: Na(+)/H(+) antiporter 1 (426 aa).

12 consecutive transmembrane segments (helical) span residues 1–21, 29–49, 57–77, 95–115, 120–140, 158–178, 184–204, 208–228, 236–256, 286–306, 309–329, and 382–402; these read MELM…SLVA, IPDI…LQII, IFEY…AFTM, ITFL…LNLP, VGYL…IPVF, IFND…FGLF, LIDL…LAKI, IIIH…GAML, LLPS…IMGL, VFIF…NYFI, LLVA…LGLI, and IAGT…ILEA.

This sequence belongs to the monovalent cation:proton antiporter 1 (CPA1) transporter (TC 2.A.36) family.

The protein localises to the cell membrane. This is a Na(+)/H(+) antiporter. Can also transport lithium. This chain is Na(+)/H(+) antiporter 1, found in Methanocaldococcus jannaschii (strain ATCC 43067 / DSM 2661 / JAL-1 / JCM 10045 / NBRC 100440) (Methanococcus jannaschii).